We begin with the raw amino-acid sequence, 434 residues long: MSIITDVYAREVLDSRGNPTLEVEVYTESGAFGRGMVPSGASTGEHEAVELRDGDKARYGGLGTQKAVDNVNNVIAEHIIGFDVRDQQGIDRAMIALDGTPNKGKLGANAILGVSIAVARAAADYLEVPLYSYLGGFNTKVLPTPMMNIINGGSHSDAPIAFQEFMIVPAGAPTFKEALRWGAEIFHALKKILKERGLETAVGDEGGFAPRFNGTEDGVETIIKAIEAAGYVPGKDVFIGLDCASSEFYDAERKVYDYTKFEGEGAAVRTAAEQIDYLEELVNKYPIITIEDGMDENDWDGWKALTERLGGKVQLVGDDFFVTNTAYLEKGIAEHAANSILIKVNQIGTLTETFDAIEMAKEAGYTAVVSHRSGETEDSTIADIAVATNAGQIKTGSLSRTDRIAKYNQLLRIEDQLGEVAEYRGLKSFYNLKK.

Gln-163 contributes to the (2R)-2-phosphoglycerate binding site. Glu-205 serves as the catalytic Proton donor. Mg(2+)-binding residues include Asp-242, Glu-291, and Asp-318. Residues Lys-343, Arg-372, Ser-373, and Lys-394 each coordinate (2R)-2-phosphoglycerate. Catalysis depends on Lys-343, which acts as the Proton acceptor.

The protein belongs to the enolase family. Mg(2+) serves as cofactor.

The protein localises to the cytoplasm. Its subcellular location is the secreted. The protein resides in the cell surface. It catalyses the reaction (2R)-2-phosphoglycerate = phosphoenolpyruvate + H2O. It functions in the pathway carbohydrate degradation; glycolysis; pyruvate from D-glyceraldehyde 3-phosphate: step 4/5. Catalyzes the reversible conversion of 2-phosphoglycerate (2-PG) into phosphoenolpyruvate (PEP). It is essential for the degradation of carbohydrates via glycolysis. The chain is Enolase from Streptococcus thermophilus (strain ATCC BAA-491 / LMD-9).